The primary structure comprises 239 residues: Leucine rich adaptor protein 1 (239 aa).

LRR repeat units follow at residues Leu-55–Leu-83 and Leu-93–Leu-114. Over residues Leu-107–Ser-118 the composition is skewed to low complexity. The disordered stretch occupies residues Leu-107 to Asp-140. Ser-118, Ser-126, and Ser-129 each carry phosphoserine.

In terms of assembly, forms a tripartite complex with CDC42BPA/CDC42BPB and MYO18A acting as an adapter connecting both. Its binding to CDC42BPA/CDC42BPB results in their activation by abolition of their negative autoregulation. Interacts with CDC42BPA and CDC42BPB. Post-translationally, phosphorylated.

The protein resides in the cytoplasm. Functionally, acts as an activator of the canonical NF-kappa-B pathway and drive the production of pro-inflammatory cytokines. Promotes the antigen (Ag)-presenting and priming function of dendritic cells via the canonical NF-kappa-B pathway. In concert with MYO18A and CDC42BPA/CDC42BPB, is involved in modulating lamellar actomyosin retrograde flow that is crucial to cell protrusion and migration. Activates CDC42BPA/CDC42BPB and targets it to actomyosin through its interaction with MYO18A, leading to MYL9/MLC2 phosphorylation and MYH9/MYH10-dependent actomyosin assembly in the lamella. The protein is Leucine rich adaptor protein 1 (Lurap1) of Rattus norvegicus (Rat).